An 808-amino-acid polypeptide reads, in one-letter code: Receptor like protein 27 (808 aa).

The N-terminal stretch at 1-31 (MLFFIKVFMKTILSVLLLFFIFASSFTLVVG) is a signal peptide. Topologically, residues 32 to 740 (LAGCRPDQIQ…DEDEEVLNWK (709 aa)) are extracellular. Residues asparagine 56, asparagine 68, asparagine 90, asparagine 103, asparagine 108, asparagine 144, and asparagine 167 are each glycosylated (N-linked (GlcNAc...) asparagine). LRR repeat units follow at residues 96 to 120 (LQHLRYLNLSNNNFTSASLPSGFGN), 122 to 144 (NRLEVLYLSSNGFLGQVPSSFSN), 145 to 170 (LSQLNILDLSHNELTGSFPFVQNLTK), 172 to 192 (SILVLSYNHFSGTIPSSLLTL), 193 to 218 (PFLSSLDLRENYLTGSIEAPNSSTSS), 220 to 241 (LEFMYLGNNHFEGQILEPISKL), 242 to 265 (INLKHLDLSFLKTSYPIDLNLFSS), 266 to 291 (FKSLVRLVLSGNSLLATSITSDSKIP), 293 to 314 (NLENLVLLSCGLIEFPTILKNL), 315 to 338 (TKLEHIDLSNNKIKGKVPEWFWNL), 340 to 363 (RLRRVNLFNNLFTDLEGSEEVLVN), and 364 to 387 (SSVRLLDLAYNHFRGPFPKPPLSI). Residue asparagine 213 is glycosylated (N-linked (GlcNAc...) asparagine). N-linked (GlcNAc...) asparagine glycosylation is present at asparagine 313. N-linked (GlcNAc...) asparagine glycosylation is present at asparagine 363. One copy of the LRR 13; degenerate repeat lies at 388–407 (NLLSAWNNSFTGNIPLETCN). 3 N-linked (GlcNAc...) asparagine glycosylation sites follow: asparagine 394, asparagine 407, and asparagine 420. LRR repeat units lie at residues 408–434 (RSSLAILDLSYNNLTGPIPRCLSDFQE), 436–456 (LIVVNLRKNNLEGSLPDIFSD), 457–481 (GALLRTLDVGYNQLTGKLPRSLLNC), 483–504 (MLRFVSVDHNKIKDTFPFWLKA), 505–529 (LPDLQALTLRSNKFHGPISPPDRGP), 532–556 (FPKLRILEISDNNFTGSLPPNYFVN), 601–625 (LTSYATIDFSGNKLEGQIPESIGLL), 626–649 (KALIALNLSNNAFTGHIPLSLANV), 650–673 (TELESLDLSRNQLSGTIPNGLKTL), and 675–698 (FLAYISVAHNQLIGEIPQGTQITG). A glycan (N-linked (GlcNAc...) asparagine) is linked at asparagine 480. Residue asparagine 544 is glycosylated (N-linked (GlcNAc...) asparagine). N-linked (GlcNAc...) asparagine glycosylation is found at asparagine 632 and asparagine 648. A helical transmembrane segment spans residues 741 to 761 (AVVIGYWPGLLLGLIMAHVIA). At 762–808 (SFKPKWLVKIVGPEKRKEDNPVRLFMTLDSRWDSFNNKKNVEQKSDM) the chain is on the cytoplasmic side.

This sequence belongs to the RLP family.

It localises to the cell membrane. The sequence is that of Receptor like protein 27 from Arabidopsis thaliana (Mouse-ear cress).